The sequence spans 380 residues: Histidinol-phosphate aminotransferase (380 aa).

N6-(pyridoxal phosphate)lysine is present on Lys232.

Belongs to the class-II pyridoxal-phosphate-dependent aminotransferase family. Histidinol-phosphate aminotransferase subfamily. As to quaternary structure, homodimer. The cofactor is pyridoxal 5'-phosphate.

The enzyme catalyses L-histidinol phosphate + 2-oxoglutarate = 3-(imidazol-4-yl)-2-oxopropyl phosphate + L-glutamate. Its pathway is amino-acid biosynthesis; L-histidine biosynthesis; L-histidine from 5-phospho-alpha-D-ribose 1-diphosphate: step 7/9. The chain is Histidinol-phosphate aminotransferase from Mycobacterium bovis (strain BCG / Pasteur 1173P2).